Here is a 222-residue protein sequence, read N- to C-terminus: ATP synthase F(0) complex subunit a (222 aa).

The next 6 helical transmembrane spans lie at 7–27, 64–84, 93–113, 132–152, 160–180, and 197–219; these read AFFD…AILL, WSLM…LGLL, QLTV…VLGF, FLIP…PITL, ITAG…LLSV, and ILEL…LYLH.

Belongs to the ATPase A chain family. In terms of assembly, component of the ATP synthase complex composed at least of ATP5F1A/subunit alpha, ATP5F1B/subunit beta, ATP5MC1/subunit c (homooctomer), MT-ATP6/subunit a, MT-ATP8/subunit 8, ATP5ME/subunit e, ATP5MF/subunit f, ATP5MG/subunit g, ATP5MK/subunit k, ATP5MJ/subunit j, ATP5F1C/subunit gamma, ATP5F1D/subunit delta, ATP5F1E/subunit epsilon, ATP5PF/subunit F6, ATP5PB/subunit b, ATP5PD/subunit d, ATP5PO/subunit OSCP. ATP synthase complex consists of a soluble F(1) head domain (subunits alpha(3) and beta(3)) - the catalytic core - and a membrane F(0) domain - the membrane proton channel (subunits c, a, 8, e, f, g, k and j). These two domains are linked by a central stalk (subunits gamma, delta, and epsilon) rotating inside the F1 region and a stationary peripheral stalk (subunits F6, b, d, and OSCP). Interacts with DNAJC30; interaction is direct.

The protein resides in the mitochondrion inner membrane. The catalysed reaction is H(+)(in) = H(+)(out). In terms of biological role, subunit a, of the mitochondrial membrane ATP synthase complex (F(1)F(0) ATP synthase or Complex V) that produces ATP from ADP in the presence of a proton gradient across the membrane which is generated by electron transport complexes of the respiratory chain. ATP synthase complex consist of a soluble F(1) head domain - the catalytic core - and a membrane F(1) domain - the membrane proton channel. These two domains are linked by a central stalk rotating inside the F(1) region and a stationary peripheral stalk. During catalysis, ATP synthesis in the catalytic domain of F(1) is coupled via a rotary mechanism of the central stalk subunits to proton translocation. With the subunit c (ATP5MC1), forms the proton-conducting channel in the F(0) domain, that contains two crucial half-channels (inlet and outlet) that facilitate proton movement from the mitochondrial intermembrane space (IMS) into the matrix. Protons are taken up via the inlet half-channel and released through the outlet half-channel, following a Grotthuss mechanism. The polypeptide is ATP synthase F(0) complex subunit a (Elephas maximus (Indian elephant)).